Here is a 1498-residue protein sequence, read N- to C-terminus: MNGGKECDGGDKEGGLAAIQVPVGWQRRVDHNGVLYISPSGSLLSCLDQVKTYLLTDGTCKCGLECPLILPKVFNFDPGAAVKQRTAEDVKADDDVTKLCIHKRKIIAVATLHQSMEAPHPSLVLTSPGGGTNATPVVPSRAATPRSVRNKSHEGITNSVMPECKNPFKLMTGSSNAMGRLYMQDLPGSQQQELHPVYPRQRLGSSEHGQKSPFRGSHGGLPSPASSGSQIYGDGSISPRTDPLGSPDVFTRNNPGFHGAPNSSPIHLNRTPLSPPSVMLHGSPVQSSCAMAGRTNIPLSPTLTTKSPVMKKPMCNFSTNMEIPRAMFHHKPPQGPPPPPPPSCALQKKPLTSEKDPLGILDPIPSKPVNQNPIIINPTSFHSNVHSQVPVMNVSMPPAVVPLPSNLPLPTVKPGHMNHGSHVQRIQHSASTSLSPSPVTSPVHMMGTGIGRIEASPQRSRSSSTSSDHGNFMMPPVGPQATCSGIKVPPRSPRSTIGSPRPSMPSSPSTKSDGHHQYKDIPNPLIAGMSNVLNTPSSAAFPTAPAGNGSVKSQPGLLGMPLNQILNQHNAASFPASSLLSAAAKAQLANQNKLAGNNSSSSNNSGAVASSGNTEGHSTLNTMFPPTANMLLPTGEGQSGRAALRDKLMSQQKDSLRKRKQPPTTVLSLLRQSQMDSSAAPKPGPDLLRKHGQGSFPISSMSQLLQSMSCQSSHLSSNSTPGCGGSNTALPCSANQLHFPDPNMNSTVLQNSLTQSIPLRGEAVHCHNANTNFVHSNSPVPNHHLAGLINQIQASGNCGMLSQSGMALGNSLHPNPPQSRISTSSTPVIPNSIVSSYNQTSSEAGGSSLPSSIAIAGSNHPAITKTTSVLQDGVIVTTAAGNPLQSQLPIGSDFPFVGQEHALHFPSNSTANNHLPHPLNPSLLSSLPISLPVNQQHLLNQNLLNILQPSAGEGDISSINNSLNNHQLTHLQSLLNSNQMFPPNQQPQQHLLQGHQNLQAFQGQPTVPCPANNNPMACLFQNFQVRMQGDAALLNKRISTQPGLTTLPENPNLALPHFQDTPCELQPRIDLGQPMKDGLVMGGQGDASVDAIYKAVVDAASKGMQVVITTAVNSTTQISPIPALSAMSAFTASIGDPLNLSSAVSAVIHGRNMGGVDHDGRLRNARGARLPKNIDHGKNSSEGDGFECFKSASCHTSRKQWDGEQSPRGERNRWKYEEFLDHPGHIHSSPCHERPNNVSTLPFLAGEQHPILLPPRNCQGDKILEENFRYNNYKRTMMSFKERLESTVERCTHINGNRPRQSRGFGELLGTAKQDLVLEGQSPGSSNSLESSLVKDYIHYNGDFNAKTINGCVPSPSDAKSISSEDDLRNPDSPSSHELIHYRPRTFNVGDLVWGQIKGLTSWPGKFIREDDVHNSCQQSPEEGKVEPEKLKTLTEGLEAYSRVRKRSRKSGKLNNHLEAAIHEAMSELDKMSGTVHQIPQGDRQMRPPKPKRRKISR.

Residues 11–81 enclose the MBD domain; sequence DKEGGLAAIQ…KVFNFDPGAA (71 aa). The segment at 57-68 is required for interaction with ASXL1/2/3; sequence DGTCKCGLECPL. Disordered regions lie at residues 199 to 274, 329 to 350, 452 to 521, 594 to 642, and 1350 to 1377; these read PRQR…TPLS, HHKP…QKKP, RIEA…YKDI, LAGN…SGRA, and NGCV…PSSH. Over residues 333–343 the composition is skewed to pro residues; it reads PQGPPPPPPPS. 2 stretches are compositionally biased toward low complexity: residues 499-511 and 594-613; these read SPRP…PSTK and LAGN…SSGN. The segment covering 614–624 has biased composition (polar residues); the sequence is TEGHSTLNTMF. The 25-residue stretch at 1385–1409 folds into the PWWP domain; the sequence is RTFNVGDLVWGQIKGLTSWPGKFIR. The segment at 1473–1498 is disordered; sequence SGTVHQIPQGDRQMRPPKPKRRKISR. Over residues 1487–1498 the composition is skewed to basic residues; that stretch reads RPPKPKRRKISR.

In terms of assembly, core component of the polycomb repressive deubiquitinase (PR-DUB) complex, at least composed of BAP1, one of ASXL1, ASXL2 or (probably) ASXL3, and one of MBD5 or MBD6. Distinct combinations of ASXL and MBD proteins may preferentially bind specific histone modification marks. The PR-DUB core associates with a number of accessory proteins, including FOXK1, FOXK2, KDM1B, HCFC1 and OGT; KDM1B specifically associates with ASXL2 PR-DUB complexes. Interacts (via MBD domain) with ASXL1, ASXL2 and ASXL3 (via PHD domain); the interaction is probably direct, mediates association with other PR-DUB complex core components. Expressed at highest levels in adult testis and Brain. In terms of tissue distribution, expressed at highest levels in the oocyte.

It is found in the nucleus. The protein localises to the chromosome. Non-catalytic component of the polycomb repressive deubiquitinase (PR-DUB) complex, a complex that specifically mediates deubiquitination of histone H2A monoubiquitinated at 'Lys-120' (H2AK119ub1). Important for stability of PR-DUB components and stimulating its ubiquitinase activity. As part of the PR-DUB complex, associates with chromatin enriched in histone marks H3K4me1, H3K4me3, and H3K27Ac, but not in H3K27me3. The PR-DUB complex is an epigenetic regulator of gene expression, including genes involved in cell growth and survivability. MBD5 and MBD6 containing complexes associate with distinct chromatin regions enriched in genes involved in different pathways. Heterochromatin recruitment is not mediated by DNA methylation. The PR-DUB complex is an epigenetic regulator of gene expression, including genes involved in development, cell communication, signaling, cell proliferation and cell viability. The sequence is that of Methyl-CpG-binding domain protein 5 (Mbd5) from Mus musculus (Mouse).